The sequence spans 386 residues: LL-diaminopimelate aminotransferase (386 aa).

The substrate site is built by Tyr13 and Gly38. Residues Tyr67, 101 to 102, Tyr126, Asn176, Tyr207, and 235 to 237 each bind pyridoxal 5'-phosphate; these read SK and SLS. Substrate is bound by residues Lys102, Tyr126, and Asn176. Position 238 is an N6-(pyridoxal phosphate)lysine (Lys238). Position 246 (Arg246) interacts with pyridoxal 5'-phosphate. Arg364 is a substrate binding site.

It belongs to the class-I pyridoxal-phosphate-dependent aminotransferase family. LL-diaminopimelate aminotransferase subfamily. As to quaternary structure, homodimer. It depends on pyridoxal 5'-phosphate as a cofactor.

It catalyses the reaction (2S,6S)-2,6-diaminopimelate + 2-oxoglutarate = (S)-2,3,4,5-tetrahydrodipicolinate + L-glutamate + H2O + H(+). Its pathway is amino-acid biosynthesis; L-lysine biosynthesis via DAP pathway; LL-2,6-diaminopimelate from (S)-tetrahydrodipicolinate (aminotransferase route): step 1/1. Involved in the synthesis of meso-diaminopimelate (m-DAP or DL-DAP), required for both lysine and peptidoglycan biosynthesis. Catalyzes the direct conversion of tetrahydrodipicolinate to LL-diaminopimelate. This Natranaerobius thermophilus (strain ATCC BAA-1301 / DSM 18059 / JW/NM-WN-LF) protein is LL-diaminopimelate aminotransferase.